Here is a 494-residue protein sequence, read N- to C-terminus: Glutamate--tRNA ligase (494 aa).

Positions 10 to 20 (PSPTGDPHVGT) match the 'HIGH' region motif. Residues cysteine 107, cysteine 109, cysteine 134, and histidine 136 each contribute to the Zn(2+) site. A 'KMSKS' region motif is present at residues 251 to 255 (KLSKR). Lysine 254 lines the ATP pocket.

It belongs to the class-I aminoacyl-tRNA synthetase family. Glutamate--tRNA ligase type 1 subfamily. In terms of assembly, monomer. It depends on Zn(2+) as a cofactor.

Its subcellular location is the cytoplasm. It carries out the reaction tRNA(Glu) + L-glutamate + ATP = L-glutamyl-tRNA(Glu) + AMP + diphosphate. Functionally, catalyzes the attachment of glutamate to tRNA(Glu) in a two-step reaction: glutamate is first activated by ATP to form Glu-AMP and then transferred to the acceptor end of tRNA(Glu). In Pseudomonas aeruginosa (strain ATCC 15692 / DSM 22644 / CIP 104116 / JCM 14847 / LMG 12228 / 1C / PRS 101 / PAO1), this protein is Glutamate--tRNA ligase.